A 625-amino-acid polypeptide reads, in one-letter code: QCMQLETSGQMRRCVSQCDKRFEEDIDWSKYDNQEDPQTECQQCQRRCRQQESDPRQQQYCQRRCKEICEEEEEYNRQRDPQQQYEQCQKRCQRRETEPRHMQICQQRCERRYEKEKRKQQKRYEEQQREDEEKYEERMKEGDNKRDPQQREYEDCRRHCEQQEPRLQYQCQRRCQEQQRQHGRGGDLMNPQRGGSGRYEEGEEKQSDNPYYFDERSLSTRFRTEEGHISVLENFYGRSKLLRALKNYRLVLLEANPNAFVLPTHLDADAILLVIGGRGALKMIHRDNRESYNLECGDVIRIPAGTTFYLINRDNNERLHIAKFLQTISTPGQYKEFFPAGGQNPEPYLSTFSKEILEAALNTQTERLRGVLGQQREGVIIRASQEQIRELTRDDSESRRWHIRRGGESSRGPYNLFNKRPLYSNKYGQAYEVKPEDYRQLQDMDVSVFIANITQGSMMGPFFNTRSTKVVVVASGEADVEMACPHLSGRHGGRGGGKRHEEEEEVHYEQVRARLSKREAIVVLAGHPVVFVSSGNENLLLFAFGINAQNNHENFLAGRERNVLQQIEPQAMELAFAASRKEVEELFNSQDESIFFPGPRQHQQQSPRSTKQQQPLVSILDFVGF.

Disordered regions lie at residues 120–152 and 180–212; these read QQKRYEEQQREDEEKYEERMKEGDNKRDPQQRE and RQHGRGGDLMNPQRGGSGRYEEGEEKQSDNPYY. Residues 198-212 show a composition bias toward basic and acidic residues; that stretch reads RYEEGEEKQSDNPYY. 2 Cupin type-1 domains span residues 230–369 and 414–584; these read SVLE…ERLR and YNLF…KEVE. Residues 594–614 are disordered; sequence IFFPGPRQHQQQSPRSTKQQQ. Residues 601-614 show a composition bias toward low complexity; the sequence is QHQQQSPRSTKQQQ.

It belongs to the 7S seed storage protein family.

Its subcellular location is the secreted. Antimicrobial peptides 2b, 2c and 2d have antibacterial and antifungal activity against a range of species. This Macadamia integrifolia (Macadamia nut) protein is Vicilin-like antimicrobial peptides 2-3.